The primary structure comprises 202 residues: Small ribosomal subunit protein uS4c (202 aa).

Residues Met90–Lys158 form the S4 RNA-binding domain.

This sequence belongs to the universal ribosomal protein uS4 family. In terms of assembly, part of the 30S ribosomal subunit. Contacts protein S5. The interaction surface between S4 and S5 is involved in control of translational fidelity.

The protein resides in the plastid. It is found in the chloroplast. One of the primary rRNA binding proteins, it binds directly to 16S rRNA where it nucleates assembly of the body of the 30S subunit. Functionally, with S5 and S12 plays an important role in translational accuracy. This is Small ribosomal subunit protein uS4c (rps4) from Anthoceros punctatus (Hornwort).